The sequence spans 104 residues: MAFTQALVTVLAFLVGTLPHKFDFSENSDLKKANGDKCVHHSQCFSDCCLIDLERSGAFCTSKSHVGMACLPQTKRSLNILCPCRIGLSCHSKDPMCPRRCQMI.

The signal sequence occupies residues methionine 1–proline 19. Disulfide bonds link cysteine 38-cysteine 49, cysteine 44-cysteine 60, cysteine 48-cysteine 82, cysteine 70-cysteine 90, and cysteine 84-cysteine 101.

This sequence belongs to the colipase family.

The protein resides in the secreted. The sequence is that of Colipase-like protein 2 (Clpsl2) from Rattus norvegicus (Rat).